Reading from the N-terminus, the 210-residue chain is MARNIGAVCRRCRRENLKLFLKGDRCYSDKCSFERRAFAPGQHGQARFKKVSDYAVQLREKQKVKSMYGVLEAQFRLTFEKAEAQKGVAGENLLILLERRLDNAVFRAGFASSRTQARQIVRHKHILINGKRVDIPSYQVSEGDVISLREKSRANAGVVDNLEAVVRRGVPTWLELDKDNFKASVKALPNREEITMPIQERLIVELYSKN.

The region spanning 99–170 (RRLDNAVFRA…NLEAVVRRGV (72 aa)) is the S4 RNA-binding domain.

It belongs to the universal ribosomal protein uS4 family. As to quaternary structure, part of the 30S ribosomal subunit. Contacts protein S5. The interaction surface between S4 and S5 is involved in control of translational fidelity.

In terms of biological role, one of the primary rRNA binding proteins, it binds directly to 16S rRNA where it nucleates assembly of the body of the 30S subunit. Its function is as follows. With S5 and S12 plays an important role in translational accuracy. The sequence is that of Small ribosomal subunit protein uS4 from Desulfotalea psychrophila (strain LSv54 / DSM 12343).